We begin with the raw amino-acid sequence, 237 residues long: Derlin-2 (237 aa).

At 1–20 the chain is on the cytoplasmic side; the sequence is MNGVVAALEEMPPVTRFYTG. The helical transmembrane segment at 21–41 threads the bilayer; sequence ACVLLTTAVHLEFVTPFHLYF. The Lumenal segment spans residues 42 to 54; the sequence is NWELIIRKYQFWR. Residues 55–75 form a helical membrane-spanning segment; sequence LITSFCFFGSFGFSFLFNMIF. The Cytoplasmic segment spans residues 76 to 97; sequence TYRYCMMLEEGSFRGRRADFVY. Residues 98-118 form a helical membrane-spanning segment; that stretch reads MFLFGAVLMILSGIFVQILFL. Residues 119–166 are Lumenal-facing; it reads GQAFTIMLVYIWSRRNPMIQMNFFGVLTFTAPYLPWVLLLFSLLLGNN. Residues 167–187 form a helical membrane-spanning segment; sequence AVVDFMGIACGHIYFFLEDVF. Residues 188–237 lie on the Cytoplasmic side of the membrane; the sequence is PFQEHGKRFLKTPQWLVYLFDERRPEPLPEDERPGGFEWGDEQPEQEQHD. The span at 212-222 shows a compositional bias: basic and acidic residues; the sequence is PEPLPEDERPG. The interval 212–237 is disordered; sequence PEPLPEDERPGGFEWGDEQPEQEQHD. Over residues 226–237 the composition is skewed to acidic residues; sequence WGDEQPEQEQHD.

The protein belongs to the derlin family.

It localises to the endoplasmic reticulum membrane. May be required for the degradation process of some specific misfolded endoplasmic reticulum (ER) luminal proteins. Participates in the transfer of misfolded proteins from the ER to the cytosol, where they are destroyed by the proteasome in a ubiquitin-dependent manner. Its precise function remains unclear, but its ability to complement der1 mutations in C.cerevisiae, suggests a similar function in the degradation of ER misfolded proteins. The protein is Derlin-2 of Caenorhabditis elegans.